The chain runs to 80 residues: Cytochrome c oxidase subunit 7B, mitochondrial (80 aa).

Residues 1 to 24 (MLPLAKNALSRLQVRSIQQVVARQ) constitute a mitochondrion transit peptide. Over 25-39 (SHQKRAPSFHDKYGN) the chain is Mitochondrial matrix. A helical membrane pass occupies residues 40–60 (AILAGGAIFCVSTWTYTATQI). Residues 61 to 80 (GIEWNMSPVGRVTPKEWRDQ) lie on the Mitochondrial intermembrane side of the membrane.

This sequence belongs to the cytochrome c oxidase VIIb family. As to quaternary structure, component of the cytochrome c oxidase (complex IV, CIV), a multisubunit enzyme composed of 14 subunits. The complex is composed of a catalytic core of 3 subunits MT-CO1, MT-CO2 and MT-CO3, encoded in the mitochondrial DNA, and 11 supernumerary subunits COX4I, COX5A, COX5B, COX6A, COX6B, COX6C, COX7A, COX7B, COX7C, COX8 and NDUFA4, which are encoded in the nuclear genome. The complex exists as a monomer or a dimer and forms supercomplexes (SCs) in the inner mitochondrial membrane with NADH-ubiquinone oxidoreductase (complex I, CI) and ubiquinol-cytochrome c oxidoreductase (cytochrome b-c1 complex, complex III, CIII), resulting in different assemblies (supercomplex SCI(1)III(2)IV(1) and megacomplex MCI(2)III(2)IV(2)).

Its subcellular location is the mitochondrion inner membrane. The protein operates within energy metabolism; oxidative phosphorylation. Component of the cytochrome c oxidase, the last enzyme in the mitochondrial electron transport chain which drives oxidative phosphorylation. The respiratory chain contains 3 multisubunit complexes succinate dehydrogenase (complex II, CII), ubiquinol-cytochrome c oxidoreductase (cytochrome b-c1 complex, complex III, CIII) and cytochrome c oxidase (complex IV, CIV), that cooperate to transfer electrons derived from NADH and succinate to molecular oxygen, creating an electrochemical gradient over the inner membrane that drives transmembrane transport and the ATP synthase. Cytochrome c oxidase is the component of the respiratory chain that catalyzes the reduction of oxygen to water. Electrons originating from reduced cytochrome c in the intermembrane space (IMS) are transferred via the dinuclear copper A center (CU(A)) of subunit 2 and heme A of subunit 1 to the active site in subunit 1, a binuclear center (BNC) formed by heme A3 and copper B (CU(B)). The BNC reduces molecular oxygen to 2 water molecules using 4 electrons from cytochrome c in the IMS and 4 protons from the mitochondrial matrix. Plays a role in proper central nervous system (CNS) development in vertebrates. This chain is Cytochrome c oxidase subunit 7B, mitochondrial (Cox7b), found in Mus musculus (Mouse).